Consider the following 391-residue polypeptide: Protein CapJ (391 aa).

It participates in capsule biogenesis; capsule polysaccharide biosynthesis. Its function is as follows. Required for the biosynthesis of type 1 capsular polysaccharide. This Staphylococcus aureus protein is Protein CapJ (capJ).